Reading from the N-terminus, the 368-residue chain is 3-dehydroquinate synthase (368 aa).

NAD(+)-binding positions include 69–74 (DGEAYK), 103–107 (GVIGD), 127–128 (TT), Lys-140, and Lys-149. Positions 182, 245, and 262 each coordinate Zn(2+).

This sequence belongs to the sugar phosphate cyclases superfamily. Dehydroquinate synthase family. The cofactor is NAD(+). Co(2+) serves as cofactor. Requires Zn(2+) as cofactor.

It localises to the cytoplasm. It carries out the reaction 7-phospho-2-dehydro-3-deoxy-D-arabino-heptonate = 3-dehydroquinate + phosphate. It functions in the pathway metabolic intermediate biosynthesis; chorismate biosynthesis; chorismate from D-erythrose 4-phosphate and phosphoenolpyruvate: step 2/7. In terms of biological role, catalyzes the conversion of 3-deoxy-D-arabino-heptulosonate 7-phosphate (DAHP) to dehydroquinate (DHQ). This chain is 3-dehydroquinate synthase, found in Pseudomonas aeruginosa (strain ATCC 15692 / DSM 22644 / CIP 104116 / JCM 14847 / LMG 12228 / 1C / PRS 101 / PAO1).